Here is a 359-residue protein sequence, read N- to C-terminus: Peptide chain release factor 1 (359 aa).

Residue Gln236 is modified to N5-methylglutamine.

This sequence belongs to the prokaryotic/mitochondrial release factor family. Methylated by PrmC. Methylation increases the termination efficiency of RF1.

The protein localises to the cytoplasm. In terms of biological role, peptide chain release factor 1 directs the termination of translation in response to the peptide chain termination codons UAG and UAA. In Lacticaseibacillus casei (strain BL23) (Lactobacillus casei), this protein is Peptide chain release factor 1.